The following is a 301-amino-acid chain: E3 ubiquitin-protein ligase RNF144B (301 aa).

Residues 26–242 (PLVTCKLCLC…YDKGPCRNKL (217 aa)) form a TRIAD supradomain region. Zn(2+) contacts are provided by Cys30, Cys33, Cys53, Cys56, Cys121, Cys126, Cys145, Cys148, Cys153, Cys156, His161, Cys166, Cys191, and Cys194. The RING-type 1 zinc-finger motif lies at 30-80 (CKLCLCEQSLDKMTMLQECQCIFCTPCLKQYMVLSIREGCGSPITCPDMVC). The IBR-type zinc finger occupies 101–166 (QLYQRLKFER…KDAWHEESSC (66 aa)). The segment at 191–220 (CPVCRIYIERNEGCAQMMCKNCKHTFCWYC) adopts an RING-type 2; atypical zinc-finger fold. Residue Cys204 is part of the active site. Zn(2+)-binding residues include Cys209, Cys212, Cys217, Cys220, His232, and Cys238. Residues 256 to 276 (VVGILVGLGVIALVTSPLLLL) traverse the membrane as a helical segment.

The protein belongs to the RBR family. RNF144 subfamily. Interacts with UBE2L3, UBE2L6 and LCMT2, as well as with BAX. Interacts with TBK1; this interaction inhibits TBK1 phosphorylation and 'Lys-63'-linked polyubiquitination. In terms of processing, auto-ubiquitinated.

It localises to the mitochondrion membrane. The protein resides in the cytoplasm. It catalyses the reaction [E2 ubiquitin-conjugating enzyme]-S-ubiquitinyl-L-cysteine + [acceptor protein]-L-lysine = [E2 ubiquitin-conjugating enzyme]-L-cysteine + [acceptor protein]-N(6)-ubiquitinyl-L-lysine.. The protein operates within protein modification; protein ubiquitination. E3 ubiquitin-protein ligase which accepts ubiquitin from E2 ubiquitin-conjugating enzymes UBE2L3 and UBE2L6 in the form of a thioester and then directly transfers the ubiquitin to targeted substrates such as LCMT2, thereby promoting their degradation. Induces apoptosis via a p53/TP53-dependent but caspase-independent mechanism. Plays a crucial role in maintaining the genomic stability by controlling the degradation of multiple proteins involved in mitotic progression and DNA damage. Regulates epithelial homeostasis by mediating degradation of CDKN1A and isoform 2 of TP63. Plays a regulatory role in innate immunity by negatively regulating IRF3 activation and IFN-beta production. Mechanistically, inhibits TBK1 phosphorylation and 'Lys-63'-linked polyubiquitination independently of its E3 ligase activity. Alternatively, promotes 'Lys-27' and 'Lys-33'-linked ubiquitination of IFIH1/MDA5, promoting selective autophagic degradation of IFIH1/MDA5 to inhibit antiviral response. This Mus musculus (Mouse) protein is E3 ubiquitin-protein ligase RNF144B (Rnf144b).